We begin with the raw amino-acid sequence, 418 residues long: Nuclear receptor coactivator 6 (418 aa).

Disordered stretches follow at residues 1 to 21 (EQIM…QNQS) and 77 to 98 (PPGP…ANND). Residues 1-215 (EQIMTNQMQG…PPRKKKNCHQ (215 aa)) are TBP/GTF2A-binding region. The CREBBP-binding region stretch occupies residues 1–352 (EQIMTNQMQG…LPVSQNVHPP (352 aa)). Positions 1–418 (EQIMTNQMQG…YQESPQNSSS (418 aa)) are NCOA1-binding region. Residues 60-214 (VSNSPSQVMG…KPPRKKKNCH (155 aa)) are NCOA6IP-binding region. Residues 84–98 (MAQQHTDPATTANND) show a composition bias toward polar residues. S171 carries the post-translational modification Phosphoserine. The short motif at 174–178 (LVNLL) is the LXXLL motif element. The tract at residues 186-418 (HFGVNNKQNN…YQESPQNSSS (233 aa)) is disordered. Positions 190–199 (NNKQNNTNAN) are enriched in low complexity. The segment covering 200 to 212 (KQKKKKPPRKKKN) has biased composition (basic residues). A compositionally biased stretch (low complexity) spans 269–279 (PLQQMPPQLMQ). A compositionally biased stretch (pro residues) spans 282–310 (APPPQPPQQQPQPQLPQQQPQPQPPPPSQ). A compositionally biased stretch (low complexity) spans 311 to 336 (PQSQQQQQQQQQQQQQQMMMMLMMQQ). Asymmetric dimethylarginine occurs at positions 342 and 353. Residues 358–370 (PDSQRVPMQQSGN) show a composition bias toward polar residues. R391 carries the asymmetric dimethylarginine modification. Residues 399-418 (PLGSNSRKMVYQESPQNSSS) show a composition bias toward polar residues.

In terms of assembly, monomer and homodimer. Interacts in vitro with the basal transcription factors GTF2A and TBP, suggesting an autonomous transactivation function. Interacts with NCOA1, CRSP3, RBM14, the histone acetyltransferase proteins EP300 and CREBBP, and with methyltransferase proteins NCOA6IP and PRMT2. Component of the MLL2/3 complex (also named ASCOM complex), at least composed of KMT2D/MLL2 or KMT2C/MLL3, ASH2L, RBBP5, WDR5, NCOA6, DPY30, KDM6A, PAXIP1/PTIP, PAGR1 and alpha- and beta-tubulin. Interacts with ZNF335; may enhance ligand-dependent transcriptional activation by nuclear hormone receptors. Phosphorylated.

It localises to the nucleus. Its function is as follows. Nuclear receptor coactivator that directly binds nuclear receptors and stimulates the transcriptional activities in a hormone-dependent fashion. Coactivate expression in an agonist- and AF2-dependent manner. May coactivate expression via a remodeling of chromatin and its interaction with histone acetyltransferase proteins. Involved in the coactivation of different nuclear receptors, such as for steroids (GR and ERs), retinoids (RARs and RXRs), thyroid hormone (TRs), vitamin D3 (VDR) and prostanoids (PPARs). Probably functions as a general coactivator, rather than just a nuclear receptor coactivator. May also be involved in the coactivation of the NF-kappa-B pathway. This Rattus norvegicus (Rat) protein is Nuclear receptor coactivator 6 (Ncoa6).